Reading from the N-terminus, the 469-residue chain is Putative dipeptidase SE_1424 (469 aa).

His-84 is a Zn(2+) binding site. Residue Asp-86 is part of the active site. Asp-115 is a binding site for Zn(2+). Residue Glu-149 is the Proton acceptor of the active site. Residues Glu-150, Asp-173, and His-440 each coordinate Zn(2+).

This sequence belongs to the peptidase M20A family. Zn(2+) is required as a cofactor.

The protein is Putative dipeptidase SE_1424 of Staphylococcus epidermidis (strain ATCC 12228 / FDA PCI 1200).